A 156-amino-acid chain; its full sequence is Small ribosomal subunit protein uS7 (156 aa).

This sequence belongs to the universal ribosomal protein uS7 family. As to quaternary structure, part of the 30S ribosomal subunit. Contacts proteins S9 and S11.

In terms of biological role, one of the primary rRNA binding proteins, it binds directly to 16S rRNA where it nucleates assembly of the head domain of the 30S subunit. Is located at the subunit interface close to the decoding center, probably blocks exit of the E-site tRNA. This Phytoplasma mali (strain AT) protein is Small ribosomal subunit protein uS7.